Consider the following 306-residue polypeptide: Serine/threonine-protein kinase mug51 (306 aa).

Belongs to the STK19 family.

It carries out the reaction L-seryl-[protein] + ATP = O-phospho-L-seryl-[protein] + ADP + H(+). It catalyses the reaction L-threonyl-[protein] + ATP = O-phospho-L-threonyl-[protein] + ADP + H(+). Its function is as follows. Serine/threonine-protein kinase. Has a role in meiosis. The polypeptide is Serine/threonine-protein kinase mug51 (mug51) (Schizosaccharomyces pombe (strain 972 / ATCC 24843) (Fission yeast)).